Here is a 161-residue protein sequence, read N- to C-terminus: Phosphopantetheine adenylyltransferase (161 aa).

Serine 9 contacts substrate. ATP contacts are provided by residues 9 to 10 (SF) and histidine 17. Substrate-binding residues include lysine 41, threonine 73, and arginine 87. ATP is bound by residues 88–90 (GLR), glutamate 98, and 123–129 (FAHISST).

It belongs to the bacterial CoaD family. As to quaternary structure, homohexamer. It depends on Mg(2+) as a cofactor.

The protein localises to the cytoplasm. The enzyme catalyses (R)-4'-phosphopantetheine + ATP + H(+) = 3'-dephospho-CoA + diphosphate. The protein operates within cofactor biosynthesis; coenzyme A biosynthesis; CoA from (R)-pantothenate: step 4/5. Its function is as follows. Reversibly transfers an adenylyl group from ATP to 4'-phosphopantetheine, yielding dephospho-CoA (dPCoA) and pyrophosphate. This Chloroflexus aggregans (strain MD-66 / DSM 9485) protein is Phosphopantetheine adenylyltransferase.